Here is a 1239-residue protein sequence, read N- to C-terminus: Anion exchange protein 2 (1239 aa).

Positions 1-237 (MSSAPRRPAK…HRSYNLQERR (237 aa)) are disordered. Topologically, residues 1-706 (MSSAPRRPAK…DFRDALDPQC (706 aa)) are cytoplasmic. Composition is skewed to basic and acidic residues over residues 37–49 (ELHR…RFEE) and 58–75 (GGEE…EYHR). Basic residues-rich tracts occupy residues 76–85 (QSSHHIHHPL) and 94–110 (RRRK…RRRP). Phosphoserine is present on residues serine 113, serine 132, serine 144, serine 170, and serine 172. The span at 120–133 (TIEEGEEDEDEASE) shows a compositional bias: acidic residues. Over residues 141–155 (TQPSPVSTPSSVQFF) the composition is skewed to low complexity. Residues 189–207 (GAQAGTQVEEAEAVAVASG) are compositionally biased toward low complexity. Gly residues predominate over residues 208-217 (TAGGDDGGAS). The residue at position 241 (serine 241) is a Phosphoserine. The residue at position 255 (threonine 255) is a Phosphothreonine. At lysine 272 the chain carries N6-methyllysine. Positions 285–318 (HLVRKNAKGSTQSGREGREPGPTPRARPRAPHKP) are disordered. Serine 441 carries the phosphoserine modification. The segment at 447 to 468 (SLLGHHHGQGAESDPHVTEPLI) is disordered. Membrane (anion exchange) regions lie at residues 706 to 1239 (CLAA…PMPV) and 708 to 1239 (AAVI…PMPV). The next 4 helical transmembrane spans lie at 707–727 (LAAV…FGGL), 752–772 (FCLL…LLVF), 794–814 (IGFW…SFLV), and 824–844 (IFAF…LVKI). At 845 to 895 (FQEHPLHGCSASNSSEVDGGENMTWAVARPTLGPGNRSLAGQSGQGKPRGQ) the chain is on the extracellular side. 3 N-linked (GlcNAc...) asparagine glycosylation sites follow: asparagine 857, asparagine 866, and asparagine 880. The helical transmembrane segment at 896–916 (PNTALLSLVLMAGTFFIAFFL) threads the bilayer. The Cytoplasmic portion of the chain corresponds to 917 to 931 (RKFKNSRFFPGRIRR). 5 consecutive transmembrane segments (helical) span residues 932 to 952 (VIGD…DYSI), 987 to 1007 (FPVW…ILIF), 1034 to 1054 (LLLI…WLAA), 1088 to 1108 (RVTG…GDLL), and 1111 to 1131 (IPLA…LNGI). The S-palmitoyl cysteine moiety is linked to residue cysteine 1171. The helical transmembrane segment at 1172 to 1192 (LALLWAVMSTAASLAFPFILI) threads the bilayer.

This sequence belongs to the anion exchanger (TC 2.A.31) family.

It is found in the apical cell membrane. It localises to the basolateral cell membrane. It catalyses the reaction hydrogencarbonate(in) + chloride(out) = hydrogencarbonate(out) + chloride(in). Sodium-independent anion exchanger which mediates the electroneutral exchange of chloride for bicarbonate ions across the cell membrane. Plays an important role in osteoclast differentiation and function. Regulates bone resorption and calpain-dependent actin cytoskeleton organization in osteoclasts via anion exchange-dependent control of pH. Essential for intracellular pH regulation in CD8(+) T-cells upon CD3 stimulation, modulating CD8(+) T-cell response. The chain is Anion exchange protein 2 (SLC4A2) from Pongo abelii (Sumatran orangutan).